Consider the following 73-residue polypeptide: Translational regulator CsrA (73 aa).

This sequence belongs to the CsrA/RsmA family. Homodimer; the beta-strands of each monomer intercalate to form a hydrophobic core, while the alpha-helices form wings that extend away from the core.

It is found in the cytoplasm. Its function is as follows. A translational regulator that binds mRNA to regulate translation initiation and/or mRNA stability. Usually binds in the 5'-UTR at or near the Shine-Dalgarno sequence preventing ribosome-binding, thus repressing translation. Its main target seems to be the major flagellin gene, while its function is anatagonized by FliW. This chain is Translational regulator CsrA, found in Clostridium kluyveri (strain NBRC 12016).